Here is a 484-residue protein sequence, read N- to C-terminus: PTS system N-acetylmuramic acid-specific EIIBC component (484 aa).

Positions 1-89 constitute a PTS EIIB type-1 domain; sequence MAKITSNTVS…NQLIDSLTSG (89 aa). The active-site Phosphocysteine intermediate; for EIIB activity is the Cys-28. The region spanning 125–484 is the PTS EIIC type-1 domain; sequence SKFATIFTPL…FFGCKDVDLS (360 aa). A run of 10 helical transmembrane segments spans residues 127–147, 168–188, 194–214, 228–248, 266–286, 310–330, 345–365, 379–399, 409–429, and 451–471; these read FATI…LLGF, LIAY…ILIG, AFGG…LGYN, FFGF…AAII, MILT…LIIM, AAIL…QGFV, LFPI…ALYF, GAII…VTLP, IGGA…LPVG, and IFPG…VGFL.

It is found in the cell inner membrane. The catalysed reaction is N-acetyl-beta-D-muramate(out) + N(pros)-phospho-L-histidyl-[protein] = N-acetyl-beta-D-muramate 6-phosphate(in) + L-histidyl-[protein]. In terms of biological role, the phosphoenolpyruvate-dependent sugar phosphotransferase system (sugar PTS), a major carbohydrate active transport system, catalyzes the phosphorylation of incoming sugar substrates concomitantly with their translocation across the cell membrane. This system is involved in N-acetylmuramic acid (MurNAc) transport, yielding cytoplasmic MurNAc-6-P. Is also able to take up anhydro-N-acetylmuramic acid (anhMurNAc), but cannot phosphorylate the carbon 6, probably because of the 1,6-anhydro ring. This is PTS system N-acetylmuramic acid-specific EIIBC component (murP) from Vibrio parahaemolyticus serotype O3:K6 (strain RIMD 2210633).